Here is a 481-residue protein sequence, read N- to C-terminus: Proline--tRNA ligase (481 aa).

This sequence belongs to the class-II aminoacyl-tRNA synthetase family. ProS type 3 subfamily. As to quaternary structure, homodimer.

The protein resides in the cytoplasm. It carries out the reaction tRNA(Pro) + L-proline + ATP = L-prolyl-tRNA(Pro) + AMP + diphosphate. Functionally, catalyzes the attachment of proline to tRNA(Pro) in a two-step reaction: proline is first activated by ATP to form Pro-AMP and then transferred to the acceptor end of tRNA(Pro). This Thermococcus kodakarensis (strain ATCC BAA-918 / JCM 12380 / KOD1) (Pyrococcus kodakaraensis (strain KOD1)) protein is Proline--tRNA ligase.